Reading from the N-terminus, the 246-residue chain is Dihydroorotate dehydrogenase B (NAD(+)), electron transfer subunit (246 aa).

Residues 3 to 95 (MEYFKGKVKE…IGPLGNGFDI (93 aa)) enclose the FAD-binding FR-type domain. FAD-binding positions include 48 to 51 (RPIS) and 70 to 71 (GT). [2Fe-2S] cluster-binding residues include Cys-213, Cys-218, Cys-221, and Cys-233.

It belongs to the PyrK family. Heterotetramer of 2 PyrK and 2 PyrD type B subunits. [2Fe-2S] cluster serves as cofactor. The cofactor is FAD.

Its pathway is pyrimidine metabolism; UMP biosynthesis via de novo pathway; orotate from (S)-dihydroorotate (NAD(+) route): step 1/1. Its function is as follows. Responsible for channeling the electrons from the oxidation of dihydroorotate from the FMN redox center in the PyrD type B subunit to the ultimate electron acceptor NAD(+). This is Dihydroorotate dehydrogenase B (NAD(+)), electron transfer subunit from Clostridium perfringens (strain 13 / Type A).